The following is a 1349-amino-acid chain: Protein turtle homolog B (1349 aa).

The first 20 residues, methionine 1–alanine 20, serve as a signal peptide directing secretion. Over glutamate 21–proline 722 the chain is Extracellular. Ig-like domains follow at residues histidine 24–serine 129, proline 139–glutamine 226, proline 228–threonine 320, proline 324–valine 415, and proline 420–threonine 504. 2 disulfides stabilise this stretch: cysteine 45–cysteine 113 and cysteine 161–cysteine 208. N-linked (GlcNAc...) asparagine glycosylation is found at asparagine 241 and asparagine 258. Cystine bridges form between cysteine 250/cysteine 303, cysteine 346/cysteine 397, and cysteine 442/cysteine 488. Fibronectin type-III domains follow at residues alanine 512 to phenylalanine 604 and leucine 614 to isoleucine 708. Asparagine 624 carries an N-linked (GlcNAc...) asparagine glycan. A helical membrane pass occupies residues valine 723 to leucine 743. The Cytoplasmic portion of the chain corresponds to alanine 744–leucine 1349. Disordered stretches follow at residues arginine 758–leucine 817, glutamine 911–proline 1081, and alanine 1099–leucine 1349. Phosphoserine is present on residues serine 775, serine 783, and serine 794. Over residues glutamine 911 to serine 921 the composition is skewed to polar residues. The span at valine 985–serine 998 shows a compositional bias: low complexity. Composition is skewed to polar residues over residues glutamate 1018 to glycine 1033, leucine 1129 to glycine 1141, and serine 1199 to glycine 1214. Position 1136 is an omega-N-methylarginine (arginine 1136). Residues serine 1207 and serine 1215 each carry the phosphoserine modification. The segment covering serine 1251–proline 1271 has biased composition (low complexity). A compositionally biased stretch (pro residues) spans proline 1283 to alanine 1292.

It belongs to the immunoglobulin superfamily. Turtle family. In terms of assembly, found in a complex with MAGI2 and NLGN2, where it interacts with MAGI2 (via PDZ 5 and PDZ 6 domains). N-glycosylated and sialylated. Not significantly O-glycosylated.

The protein resides in the postsynaptic cell membrane. It is found in the postsynaptic density. Its function is as follows. Transmembrane protein which is abundantly expressed in interneurons, where it may regulate inhibitory synapse development. May mediate homophilic cell adhesion. This chain is Protein turtle homolog B (IGSF9B), found in Homo sapiens (Human).